The chain runs to 44 residues: Phycoerythrin alpha-1 chain (44 aa).

The interval 1–44 is disordered; the sequence is AMDKSAKAPQITIFDHRGCSRAPKSETGGTATKDDQMMVKVSQV. Lys-4 carries the 5-hydroxylysine modification. 15,16-dihydrobiliverdin-binding residues include Cys-19 and Arg-21. The tract at residues 24 to 26 is 15,16-dihydrobiliverdin chromophore; sequence KSE. Lys-40 contributes to the 15,16-dihydrobiliverdin binding site.

The protein belongs to the phycoerythrin family. As to quaternary structure, heterotetramer of 2 different alpha chains and 2 identical beta chains. The subunit composition could comprise of any combination of 2 out of 4 different alpha units with an invariant beta unit. Post-translationally, contains one covalently linked 15,16-dihydrobiliverdin chromophore.

The protein localises to the plastid. Its subcellular location is the chloroplast thylakoid membrane. Functionally, light-harvesting photosynthetic tetrapyrrole chromophore-protein from the phycobiliprotein complex. This chain is Phycoerythrin alpha-1 chain (cpeA1), found in Rhodomonas sp. (strain CS 24) (Chroomonas sp. (strain CS24)).